The chain runs to 124 residues: Putative peptidyl-tRNA hydrolase (124 aa).

This sequence belongs to the PTH2 family.

The catalysed reaction is an N-acyl-L-alpha-aminoacyl-tRNA + H2O = an N-acyl-L-amino acid + a tRNA + H(+). The chain is Putative peptidyl-tRNA hydrolase from Fowlpox virus (strain NVSL) (FPV).